The following is a 452-amino-acid chain: Alkane uptake protein A (452 aa).

The N-terminal stretch at 1–36 (MSERSVYMVLSPRFSVRAVSLAVAAVSASLSMPTSA) is a signal peptide.

It belongs to the OmpP1/FadL family. In terms of assembly, interacts with the inner membrane protein AupB.

The protein resides in the cell outer membrane. Required for growth on alkanes. Probably involved in the uptake of micelle-solubilized alkanes. This chain is Alkane uptake protein A, found in Marinobacter nauticus (strain ATCC 49840 / DSM 8798 / CIP 103578 / SP17) (Marinobacter hydrocarbonoclasticus).